We begin with the raw amino-acid sequence, 305 residues long: Acetylglutamate kinase (305 aa).

Residues glycine 67–glycine 68, arginine 89, and asparagine 190 each bind substrate.

It belongs to the acetylglutamate kinase family. ArgB subfamily.

Its subcellular location is the cytoplasm. The enzyme catalyses N-acetyl-L-glutamate + ATP = N-acetyl-L-glutamyl 5-phosphate + ADP. Its pathway is amino-acid biosynthesis; L-arginine biosynthesis; N(2)-acetyl-L-ornithine from L-glutamate: step 2/4. Catalyzes the ATP-dependent phosphorylation of N-acetyl-L-glutamate. This Bifidobacterium longum subsp. infantis (strain ATCC 15697 / DSM 20088 / JCM 1222 / NCTC 11817 / S12) protein is Acetylglutamate kinase.